We begin with the raw amino-acid sequence, 505 residues long: AMP phosphorylase (505 aa).

Residues Gly-170, 196–201 (SRAITS), and Thr-205 each bind AMP. The Proton donor role is filled by Asp-258. AMP is bound by residues Ser-266 and Lys-290.

The protein belongs to the thymidine/pyrimidine-nucleoside phosphorylase family. Type 2 subfamily.

The enzyme catalyses AMP + phosphate = alpha-D-ribose 1,5-bisphosphate + adenine. It catalyses the reaction CMP + phosphate = cytosine + alpha-D-ribose 1,5-bisphosphate. The catalysed reaction is UMP + phosphate = alpha-D-ribose 1,5-bisphosphate + uracil. Its function is as follows. Catalyzes the conversion of AMP and phosphate to adenine and ribose 1,5-bisphosphate (R15P). Exhibits phosphorylase activity toward CMP and UMP in addition to AMP. Functions in an archaeal AMP degradation pathway, together with R15P isomerase and RubisCO. In Methanococcus maripaludis (strain C6 / ATCC BAA-1332), this protein is AMP phosphorylase.